A 311-amino-acid chain; its full sequence is Quinolinate synthase (311 aa).

Iminosuccinate contacts are provided by H25 and S42. A [4Fe-4S] cluster-binding site is contributed by C87. Residues 113–115 (YIN) and S130 each bind iminosuccinate. C175 contacts [4Fe-4S] cluster. Iminosuccinate-binding positions include 201–203 (HPE) and T218. C268 is a [4Fe-4S] cluster binding site.

The protein belongs to the quinolinate synthase family. Type 2 subfamily. [4Fe-4S] cluster serves as cofactor.

Its subcellular location is the cytoplasm. The catalysed reaction is iminosuccinate + dihydroxyacetone phosphate = quinolinate + phosphate + 2 H2O + H(+). It participates in cofactor biosynthesis; NAD(+) biosynthesis; quinolinate from iminoaspartate: step 1/1. Its function is as follows. Catalyzes the condensation of iminoaspartate with dihydroxyacetone phosphate to form quinolinate. The sequence is that of Quinolinate synthase from Saccharolobus solfataricus (strain ATCC 35092 / DSM 1617 / JCM 11322 / P2) (Sulfolobus solfataricus).